A 97-amino-acid polypeptide reads, in one-letter code: Putative CC-type chemokine U83 (97 aa).

Cystine bridges form between Cys-32–Cys-62 and Cys-33–Cys-76.

It belongs to the intercrine beta (chemokine CC) family. Highly divergent.

The chain is Putative CC-type chemokine U83 (U83) from Human herpesvirus 6A (strain Uganda-1102) (HHV-6 variant A).